The sequence spans 107 residues: Iron-binding protein IscA (107 aa).

Fe cation-binding residues include cysteine 35, cysteine 99, and cysteine 101.

The protein belongs to the HesB/IscA family. As to quaternary structure, homodimer; may form tetramers and higher multimers. Fe cation serves as cofactor.

Functionally, is able to transfer iron-sulfur clusters to apo-ferredoxin. Multiple cycles of [2Fe2S] cluster formation and transfer are observed, suggesting that IscA acts catalytically. Recruits intracellular free iron so as to provide iron for the assembly of transient iron-sulfur cluster in IscU in the presence of IscS, L-cysteine and the thioredoxin reductase system TrxA/TrxB. The sequence is that of Iron-binding protein IscA from Klebsiella pneumoniae (strain 342).